Reading from the N-terminus, the 667-residue chain is Protein-glutamine gamma-glutamyltransferase 4 (667 aa).

Asn151, Asn220, and Asn227 each carry an N-linked (GlcNAc...) asparagine glycan. Residues Cys256, His315, and Asp338 contribute to the active site. Positions 378 and 380 each coordinate Ca(2+). The N-linked (GlcNAc...) asparagine glycan is linked to Asn408. Residues Glu430 and Glu435 each coordinate Ca(2+). The disordered stretch occupies residues 430–449 (EGSPEERKAMEKASGKRPDD). 2 N-linked (GlcNAc...) asparagine glycosylation sites follow: Asn472 and Asn488.

It belongs to the transglutaminase superfamily. Transglutaminase family. In terms of assembly, homodimer. The cofactor is Ca(2+). The N-terminus is blocked. Post-translationally, probably linked to the cell membrane via a lipid-anchor, possibly a GPI-anchor. In terms of processing, N-glycosylated on 2 Asn residues by a high mannose oligosaccharide consisting of five mannose residues and a fucosylated biantennary complex glycan. In terms of tissue distribution, expressed in the coagulating gland, the dorsal part of the prostate and in semen (at protein level). Expressed at low levels in the lateral prostate and seminal vesicle. Not expressed in the epididymis, kidney, liver, serum, sperm plug, testes and ventral prostate.

It localises to the secreted. The protein resides in the cell membrane. It carries out the reaction L-glutaminyl-[protein] + L-lysyl-[protein] = [protein]-L-lysyl-N(6)-5-L-glutamyl-[protein] + NH4(+). Functionally, associated with the mammalian reproductive process. Plays an important role in the formation of the seminal coagulum through the cross-linking of specific proteins present in the seminal plasma. Transglutaminase is also required to stabilize the copulatory plug. This chain is Protein-glutamine gamma-glutamyltransferase 4 (Tgm4), found in Rattus norvegicus (Rat).